A 704-amino-acid polypeptide reads, in one-letter code: Elongation factor G (704 aa).

Residues 8 to 291 (DKVRNIGIMA…AVVEYLASPV (284 aa)) enclose the tr-type G domain. Residues 17–24 (AHIDAGKT), 90–94 (DTPGH), and 144–147 (NKMD) contribute to the GTP site.

The protein belongs to the TRAFAC class translation factor GTPase superfamily. Classic translation factor GTPase family. EF-G/EF-2 subfamily.

The protein resides in the cytoplasm. Catalyzes the GTP-dependent ribosomal translocation step during translation elongation. During this step, the ribosome changes from the pre-translocational (PRE) to the post-translocational (POST) state as the newly formed A-site-bound peptidyl-tRNA and P-site-bound deacylated tRNA move to the P and E sites, respectively. Catalyzes the coordinated movement of the two tRNA molecules, the mRNA and conformational changes in the ribosome. The polypeptide is Elongation factor G (Pelodictyon phaeoclathratiforme (strain DSM 5477 / BU-1)).